Reading from the N-terminus, the 64-residue chain is Temporin-ALf (64 aa).

Positions 1–22 (MFTLKKSLLLLFFLGTINLSLC) are cleaved as a signal peptide. Positions 23 to 46 (EQERNAEEERRDEPDERNAEVEKR) are excised as a propeptide. A Leucine amide modification is found at leucine 62.

As to expression, expressed by the skin glands.

Its subcellular location is the secreted. Antimicrobial peptide with activity against Gram-positive and Gram-negative bacteria and against fungi. Has been tested against S.aureus (MIC=2.5 ug/mL), B.pumilus (MIC=5.0 ug/mL), B.cereus (MIC=30.0 ug/mL), E.coli (MIC=2.5 ug/mL), B.dysenteriae (MIC=5.0 ug/mL), A.cacoaceticus (MIC=30.0 ug/mL), P.aeruginosa (MIC=5.0 ug/mL) and C.albicans (MIC=2.5 ug/mL). Also shows a weak hemolytic activity. The sequence is that of Temporin-ALf from Amolops loloensis (Lolokou Sucker Frog).